The chain runs to 290 residues: Probable porphobilinogen deaminase (290 aa).

An S-(dipyrrolylmethanemethyl)cysteine modification is found at C230.

This sequence belongs to the HMBS family. Requires dipyrromethane as cofactor.

It carries out the reaction 4 porphobilinogen + H2O = hydroxymethylbilane + 4 NH4(+). The protein operates within porphyrin-containing compound metabolism; protoporphyrin-IX biosynthesis; coproporphyrinogen-III from 5-aminolevulinate: step 2/4. Functionally, tetrapolymerization of the monopyrrole PBG into the hydroxymethylbilane pre-uroporphyrinogen in several discrete steps. This is Probable porphobilinogen deaminase from Metallosphaera sedula (strain ATCC 51363 / DSM 5348 / JCM 9185 / NBRC 15509 / TH2).